The primary structure comprises 275 residues: WIMGHMVNAIEQVDEFLDLGANAIEFDVDFDDDGVAKYTHHGIPCDCGRLCTKYAVFTEYLDYVRQVTTPGDPKFRKELVLLALDLKLQRISSEKAYAAGVDVATKLLDHYWMRGWNGGRAYILLNIPLVEDYEFIRAFKDTLRKEGHEQYNAKVGINFTGNEDLDEIREVLEKLGEDEHIWQADGITSCFPRGTERLKKALEKRDTPGYKYISKVYAWTLVRSSIMRRSLRLGVDGVMSNYPDRVVKVLKEKEFSDKFRLATYADNPWEKFTPI.

His-5 is a catalytic residue. 2 residues coordinate Mg(2+): Glu-25 and Asp-27. Residue His-41 is the Nucleophile of the active site. 2 disulfides stabilise this stretch: Cys-45/Cys-51 and Cys-47/Cys-190. Residue Asp-85 participates in Mg(2+) binding.

This sequence belongs to the arthropod phospholipase D family. Class II subfamily. The cofactor is Mg(2+). Expressed by the venom gland.

It localises to the secreted. It carries out the reaction an N-(acyl)-sphingosylphosphocholine = an N-(acyl)-sphingosyl-1,3-cyclic phosphate + choline. The catalysed reaction is an N-(acyl)-sphingosylphosphoethanolamine = an N-(acyl)-sphingosyl-1,3-cyclic phosphate + ethanolamine. It catalyses the reaction a 1-acyl-sn-glycero-3-phosphocholine = a 1-acyl-sn-glycero-2,3-cyclic phosphate + choline. The enzyme catalyses a 1-acyl-sn-glycero-3-phosphoethanolamine = a 1-acyl-sn-glycero-2,3-cyclic phosphate + ethanolamine. Dermonecrotic toxins cleave the phosphodiester linkage between the phosphate and headgroup of certain phospholipids (sphingolipid and lysolipid substrates), forming an alcohol (often choline) and a cyclic phosphate. This toxin acts on sphingomyelin (SM). It may also act on ceramide phosphoethanolamine (CPE), lysophosphatidylcholine (LPC) and lysophosphatidylethanolamine (LPE), but not on lysophosphatidylserine (LPS), and lysophosphatidylglycerol (LPG). It acts by transphosphatidylation, releasing exclusively cyclic phosphate products as second products. Induces dermonecrosis, hemolysis, increased vascular permeability, edema, inflammatory response, and platelet aggregation. This Sicarius peruensis (Six-eyed sand spider) protein is Dermonecrotic toxin SpeSicTox-betaIIA2ii.